A 588-amino-acid chain; its full sequence is Outer membrane transporter CdiB (588 aa).

One can recognise a POTRA domain in the interval 104 to 179 (FTVSSIVVSG…GVLHITVMEG (76 aa)).

The protein belongs to the TPS (TC 1.B.20) family.

It localises to the cell outer membrane. In terms of biological role, potential outer membrane protein component of a toxin-immunity protein module, which functions as a cellular contact-dependent growth inhibition (CDI) system. CDI modules allow bacteria to communicate with and inhibit the growth of closely related neighboring bacteria in a contact-dependent fashion. This protein may be required for secretion and assembly of the CdiA toxin protein. Inhibitory cells must be in logarithmic (not stationary) phase to inhibit growth of their targets, while the presence of P or S but not type 1 pili protects the target cells against growth inhibition. Its function is as follows. Probable member of a two partner secretion pathway (TPS) in which it mediates the secretion of CdiA. The polypeptide is Outer membrane transporter CdiB (Escherichia coli).